The chain runs to 324 residues: Putative transcription factor sel-7 (324 aa).

Residues 67 to 85 (SPPQTVISEAPPQSFTPSA) show a composition bias toward polar residues. Positions 67–151 (SPPQTVISEA…DEKVLADGPF (85 aa)) are disordered. The segment covering 86-98 (TNSTSDKTSSSLK) has biased composition (low complexity). Over residues 106–123 (SDGDLDMEGEEDTEELFD) the composition is skewed to acidic residues. A compositionally biased stretch (polar residues) spans 124–133 (NESQPSQRNQ). Basic and acidic residues predominate over residues 134 to 146 (SPKETEVEDEKVL).

As to quaternary structure, multimer. May interact with mediator complex subunit mdt-29. As to expression, widely expressed, including in pharyngeal muscle cells and body wall muscle cells.

The protein resides in the nucleus. Its function is as follows. Putative transcription factor. Positive regulator of the lin-12/Notch signaling pathway. Binds to specific DNA sequences in regulatory elements. Involved in cell fate decisions that require cell-cell interactions, such as the anchor cell (AC) / ventral uterine (VU) precursor cell fate decision. Heterochronic protein which controls the choice of stage specific cell fates, including the larval L3 stage-specific fate of seam cells. Involved in regulating the temporal expression pattern of hunchback-like protein hbl-1, thereby playing a role in the progression between larval stages L2 and L3. In Caenorhabditis elegans, this protein is Putative transcription factor sel-7.